The following is a 527-amino-acid chain: Pentatricopeptide repeat-containing protein At5g41170, mitochondrial (527 aa).

The transit peptide at Met1–Arg35 directs the protein to the mitochondrion. PPR repeat units follow at residues Ala36–Pro70, Ser71–His105, Asp106–Pro140, Asp141–Pro175, Asp176–Pro210, Asp211–Pro245, Asp246–Pro280, Asn281–Pro315, Asp316–Gly350, Asn351–Pro385, Asn386–Gly420, Asn424–Ile458, Gly459–Pro493, and Asn494–Ser527.

Belongs to the PPR family. P subfamily.

Its subcellular location is the mitochondrion. This chain is Pentatricopeptide repeat-containing protein At5g41170, mitochondrial, found in Arabidopsis thaliana (Mouse-ear cress).